A 403-amino-acid polypeptide reads, in one-letter code: Accessory Sec system protein translocase subunit SecY2 (403 aa).

A run of 10 helical transmembrane segments spans residues 17–37 (MLYT…SIVS), 63–83 (LNIF…LMLI), 105–125 (ILTL…YVSK), 131–151 (DNIY…VWLA), 157–177 (YGIA…MMHQ), 186–206 (HIVI…LLFI), 240–260 (ITLM…HFIL), 276–296 (FDSP…GYFL), 339–359 (WFGS…TLFV), and 366–386 (IYFS…AETI).

It belongs to the SecY/SEC61-alpha family. SecY2 subfamily. Component of the accessory SecA2/SecY2 protein translocase complex required to export cell wall proteins. May form heterotrimers with SecE and SecG subunits.

The protein localises to the cell membrane. Part of the accessory SecA2/SecY2 system specifically required for export of possible cell wall proteins. The central subunit of a protein translocation channel. The protein is Accessory Sec system protein translocase subunit SecY2 of Staphylococcus aureus (strain N315).